A 239-amino-acid chain; its full sequence is Urease accessory protein UreE (239 aa).

Residues 185-239 form a disordered region; the sequence is VASPLDEPHGSGLHIHGIHSHGDGHSHSHDSHSHSHDSDHGHSHSHGDHDHDHKH. Residues 204 to 239 show a composition bias toward basic and acidic residues; that stretch reads SHGDGHSHSHDSHSHSHDSDHGHSHSHGDHDHDHKH.

Belongs to the UreE family.

The protein localises to the cytoplasm. Its function is as follows. Involved in urease metallocenter assembly. Binds nickel. Probably functions as a nickel donor during metallocenter assembly. This chain is Urease accessory protein UreE, found in Yersinia frederiksenii.